A 346-amino-acid polypeptide reads, in one-letter code: Annexin A1 (346 aa).

Ala2 carries the N-acetylalanine modification. A Phosphoserine; by TRPM7 modification is found at Ser5. An Isoglutamyl lysine isopeptide (Gln-Lys) (interchain with K-?) cross-link involves residue Gln19. Tyr21 is subject to Phosphotyrosine; by EGFR. The interval 25–47 is disordered; the sequence is VKGSKGGPGSAVSPYPTFNPSSD. Phosphoserine occurs at positions 34 and 37. Thr41 bears the Phosphothreonine mark. Annexin repeat units follow at residues 42–113, 114–185, 197–269, and 273–344; these read FNPS…ALLK, TPAQ…SLAK, DLAD…VVVK, and SKPM…ALCG. Lys58 carries the N6-acetyllysine modification. Ca(2+) contacts are provided by Gly59, Val60, Glu62, Lys97, Leu100, Glu105, Met127, Gly129, Gly131, Thr132, and Glu134. A Phosphothreonine modification is found at Thr136. The Ca(2+) site is built by Asp171, Gly210, and Arg213. A Glycyl lysine isopeptide (Lys-Gly) (interchain with G-Cter in SUMO1); alternate cross-link involves residue Lys214. Residue Lys214 forms a Glycyl lysine isopeptide (Lys-Gly) (interchain with G-Cter in SUMO2); alternate linkage. Position 215 (Gly215) interacts with Ca(2+). Position 239 is an N6-acetyllysine (Lys239). The Ca(2+) site is built by Asp253, Glu255, and Leu256. Lys257 is covalently cross-linked (Glycyl lysine isopeptide (Lys-Gly) (interchain with G-Cter in SUMO1)). The Ca(2+) site is built by Glu261, Met286, Gly288, and Gly290. N6-acetyllysine is present on Lys312. Residues Cys324 and Cys343 are joined by a disulfide bond. Leu328, Glu330, and Thr331 together coordinate Ca(2+). Residue Lys332 forms a Glycyl lysine isopeptide (Lys-Gly) (interchain with G-Cter in SUMO1) linkage. Residue Glu336 coordinates Ca(2+).

Belongs to the annexin family. As to quaternary structure, homodimer; non-covalently linked. Homodimer; linked by transglutamylation. Homodimers linked by transglutamylation are observed in placenta, but not in other tissues. Interacts with S100A11. Heterotetramer, formed by two molecules each of S100A11 and ANXA1. Interacts with DYSF. Interacts with EGFR. Post-translationally, phosphorylated by EGFR. Phosphorylated by protein kinase C and TRPM7. Phosphorylated in response to EGF treatment. Sumoylated. In terms of processing, proteolytically cleaved by cathepsin CTSG to release the active N-terminal peptide Ac2-26. Detected in lung and spleen (at protein level).

Its subcellular location is the nucleus. It is found in the cytoplasm. The protein localises to the cell projection. It localises to the cilium. The protein resides in the basolateral cell membrane. Its subcellular location is the lateral cell membrane. It is found in the early endosome. The protein localises to the cell membrane. It localises to the cytoplasmic vesicle membrane. The protein resides in the apical cell membrane. Its subcellular location is the membrane. It is found in the endosome. The protein localises to the secreted. It localises to the extracellular space. The protein resides in the extracellular exosome. Its subcellular location is the cytoplasmic vesicle. It is found in the secretory vesicle lumen. The protein localises to the phagocytic cup. Plays important roles in the innate immune response as effector of glucocorticoid-mediated responses and regulator of the inflammatory process. Has anti-inflammatory activity. Plays a role in glucocorticoid-mediated down-regulation of the early phase of the inflammatory response. Contributes to the adaptive immune response by enhancing signaling cascades that are triggered by T-cell activation, regulates differentiation and proliferation of activated T-cells. Promotes the differentiation of T-cells into Th1 cells and negatively regulates differentiation into Th2 cells. Has no effect on unstimulated T-cells. Negatively regulates hormone exocytosis via activation of the formyl peptide receptors and reorganization of the actin cytoskeleton. Has high affinity for Ca(2+) and can bind up to eight Ca(2+) ions. Displays Ca(2+)-dependent binding to phospholipid membranes. Plays a role in the formation of phagocytic cups and phagosomes. Plays a role in phagocytosis by mediating the Ca(2+)-dependent interaction between phagosomes and the actin cytoskeleton. Functionally, functions at least in part by activating the formyl peptide receptors and downstream signaling cascades. Promotes chemotaxis of granulocytes and monocytes via activation of the formyl peptide receptors. Promotes rearrangement of the actin cytoskeleton, cell polarization and cell migration. Promotes resolution of inflammation and wound healing. Acts via neutrophil N-formyl peptide receptors to enhance the release of CXCL2. In Sus scrofa (Pig), this protein is Annexin A1 (ANXA1).